The sequence spans 420 residues: Tyrosine--tRNA ligase (420 aa).

Y33 provides a ligand contact to L-tyrosine. A 'HIGH' region motif is present at residues 38–47 (PTGDSLHAGH). L-tyrosine is bound by residues Y167 and Q171. The short motif at 227–231 (KFGKS) is the 'KMSKS' region element. K230 provides a ligand contact to ATP. The 67-residue stretch at 352 to 418 (PTIIDLLIGA…GKKNFAGVKY (67 aa)) folds into the S4 RNA-binding domain.

Belongs to the class-I aminoacyl-tRNA synthetase family. TyrS type 1 subfamily. In terms of assembly, homodimer.

It localises to the cytoplasm. It carries out the reaction tRNA(Tyr) + L-tyrosine + ATP = L-tyrosyl-tRNA(Tyr) + AMP + diphosphate + H(+). Functionally, catalyzes the attachment of tyrosine to tRNA(Tyr) in a two-step reaction: tyrosine is first activated by ATP to form Tyr-AMP and then transferred to the acceptor end of tRNA(Tyr). This chain is Tyrosine--tRNA ligase, found in Corynebacterium diphtheriae (strain ATCC 700971 / NCTC 13129 / Biotype gravis).